We begin with the raw amino-acid sequence, 959 residues long: DNA-directed RNA polymerase subunit beta'' (959 aa).

Zn(2+) is bound by residues C211, C288, C295, and C298.

The protein belongs to the RNA polymerase beta' chain family. RpoC2 subfamily. As to quaternary structure, in plastids the minimal PEP RNA polymerase catalytic core is composed of four subunits: alpha, beta, beta', and beta''. When a (nuclear-encoded) sigma factor is associated with the core the holoenzyme is formed, which can initiate transcription. Zn(2+) is required as a cofactor.

It is found in the plastid. The protein resides in the apicoplast. It catalyses the reaction RNA(n) + a ribonucleoside 5'-triphosphate = RNA(n+1) + diphosphate. Functionally, DNA-dependent RNA polymerase catalyzes the transcription of DNA into RNA using the four ribonucleoside triphosphates as substrates. The protein is DNA-directed RNA polymerase subunit beta'' of Plasmodium falciparum (isolate 3D7).